The chain runs to 105 residues: Large ribosomal subunit protein uL24 (105 aa).

It belongs to the universal ribosomal protein uL24 family. In terms of assembly, part of the 50S ribosomal subunit.

Functionally, one of two assembly initiator proteins, it binds directly to the 5'-end of the 23S rRNA, where it nucleates assembly of the 50S subunit. In terms of biological role, one of the proteins that surrounds the polypeptide exit tunnel on the outside of the subunit. The polypeptide is Large ribosomal subunit protein uL24 (Thioalkalivibrio sulfidiphilus (strain HL-EbGR7)).